A 306-amino-acid polypeptide reads, in one-letter code: Plant-type L-asparaginase (306 aa).

Residue Thr-176 is the Nucleophile of the active site. Substrate contacts are provided by residues 203–206 and 225–228; these read RVGD and TGLG.

Belongs to the Ntn-hydrolase family. Heterotetramer of two alpha and two beta chains arranged as a dimer of alpha/beta heterodimers. In terms of processing, autocleaved. Generates the alpha and beta subunits. The N-terminal residue of the beta subunit is thought to be responsible for the nucleophile hydrolase activity.

It catalyses the reaction L-asparagine + H2O = L-aspartate + NH4(+). Its function is as follows. Catalyzes the hydrolysis of L-asparagine into L-aspartate and ammonia. The chain is Plant-type L-asparaginase from Pyrococcus furiosus (strain ATCC 43587 / DSM 3638 / JCM 8422 / Vc1).